Reading from the N-terminus, the 462-residue chain is Ammonium transporter Rh type B (462 aa).

At 1–11 (MTDPSTNMRLK) the chain is on the cytoplasmic side. A helical membrane pass occupies residues 12–32 (LPITCFILQIILIILFGVLVQ). At 33–62 (YDEDTDAKKHHHGNHSESKSDIENDFYYRY) the chain is on the extracellular side. The N-linked (GlcNAc...) asparagine glycan is linked to asparagine 46. Residues 63-83 (PSFQDVHVMIFVGFGFLMTFL) form a helical membrane-spanning segment. Residues 84–94 (QRYGFSSVGFN) lie on the Cytoplasmic side of the membrane. A helical transmembrane segment spans residues 95–115 (FLIAAFSLQWATLMQGFFHGL). Topologically, residues 116 to 125 (HEGKIHIGVE) are extracellular. Residues 126-146 (SMINADFCTGSVLISFGAVLG) form a helical membrane-spanning segment. Residues 147-152 (KTSPVQ) lie on the Cytoplasmic side of the membrane. The chain crosses the membrane as a helical span at residues 153–173 (LLFMAVFEVTLFAVNEFILLT). Over 174–180 (LLGTKDA) the chain is Extracellular. The helical transmembrane segment at 181–201 (GGSMTIHTFGAYFGLMVTRIL) threads the bilayer. At 202 to 220 (YRPNLDKSKHKNCSVYHSD) the chain is on the cytoplasmic side. The chain crosses the membrane as a helical span at residues 221-241 (LFAMIGTLYLWMFWPSFNSAV). Over 242 to 302 (TEHGDPQHRT…VAAGTAGEMM (61 aa)) the chain is Extracellular. Residues 303 to 323 (LTPFGSMIVGFLAGIISVLGF) traverse the membrane as a helical segment. Over 324–344 (KYLTPILENKLKIQDTCGIHN) the chain is Cytoplasmic. Residues 345 to 365 (LHGMPGVLGAIVGAVTASLAS) traverse the membrane as a helical segment. The Extracellular portion of the chain corresponds to 366 to 395 (KEVYGEGLEKVFPDVASGKRTASDQGGVQA). Residues 396–416 (ISLAVTLGMALFGGLIVGFIL) traverse the membrane as a helical segment. The Cytoplasmic portion of the chain corresponds to 417-462 (KLPIFGAPRDTTCFEDSLYWEVPGEEESHEDQLTTVKTEESDKLNS). The segment at 441–462 (EEESHEDQLTTVKTEESDKLNS) is disordered. Residues 453–462 (KTEESDKLNS) are compositionally biased toward basic and acidic residues.

It belongs to the ammonium transporter (TC 2.A.49) family. Rh subfamily.

It localises to the basolateral cell membrane. Its subcellular location is the cytoplasmic vesicle membrane. Functions as an ammonia transporter. May play a role in the elimination of ammonia in the gill. The polypeptide is Ammonium transporter Rh type B (rhbg) (Oryzias latipes (Japanese rice fish)).